The primary structure comprises 326 residues: MVDYYEVLGVQRHASPEDIKKAYRKLALKWHPDKNPENKEEAERKFKQVAEAYEVLSDAKKRDIYDKYGKEGLNGGGGGGSHFDSPFEFGFTFRNPDDVFREFFGGRDPFSFDFFEDPFEDFFGNRRGPRGSRSRGTGSFFSAFSGFPSFGSGFSSFDTGFTSFGSLGHGGLTSFSSTSFGGSGMGNFKSISTSTKMVNGRKITTKRIVENGQERVEVGEDGQLKSLTINGVADDDALAEERMRRGQNALPAQPAGLRPPKPPRPASLLRHAPHCLSEEEGEQDRPRAPGPWDPLASAAGLKEGGKRKKQKQREESKKKKSTKGNH.

Residues 2–69 (VDYYEVLGVQ…KKRDIYDKYG (68 aa)) enclose the J domain. Positions 2-146 (VDYYEVLGVQ…TGSFFSAFSG (145 aa)) are interaction with HSP70. Positions 119-242 (FEDFFGNRRG…ADDDALAEER (124 aa)) are interaction with KRT18. Arginine 135 carries the omega-N-methylarginine modification. The disordered stretch occupies residues 249–326 (ALPAQPAGLR…KKKKSTKGNH (78 aa)). Phosphoserine is present on serine 277.

In terms of assembly, homooligomer. Interacts with BAG3, HSPB8 and STUB1. Interacts with ALKBH1. Interacts with HSP70, KRT18 and PTTG.

It is found in the cytoplasm. The protein localises to the perinuclear region. Its subcellular location is the nucleus. The protein resides in the myofibril. It localises to the sarcomere. It is found in the z line. In terms of biological role, has a stimulatory effect on the ATPase activity of HSP70 in a dose-dependent and time-dependent manner and hence acts as a co-chaperone of HSP70. Plays an indispensable role in the organization of KRT8/KRT18 filaments. Acts as an endogenous molecular chaperone for neuronal proteins including huntingtin. Suppresses aggregation and toxicity of polyglutamine-containing, aggregation-prone proteins. Also reduces cellular toxicity and caspase-3 activity. The chain is DnaJ homolog subfamily B member 6 (DNAJB6) from Pongo abelii (Sumatran orangutan).